The sequence spans 344 residues: Meiotic expression up-regulated protein 26 (344 aa).

The protein localises to the nucleus. In Schizosaccharomyces pombe (strain 972 / ATCC 24843) (Fission yeast), this protein is Meiotic expression up-regulated protein 26 (meu26).